The chain runs to 67 residues: Conotoxin Cl6.7 (67 aa).

Residues 1-24 form the signal peptide; it reads MKVTAVLMVAVLVLTACQLTTANT. Positions 25–39 are excised as a propeptide; sequence TDYVRRIPARKSTMS. 3 disulfide bridges follow: C43-C58, C50-C62, and C57-C66.

This sequence belongs to the conotoxin O1 superfamily. In terms of tissue distribution, expressed by the venom duct.

Its subcellular location is the secreted. The protein is Conotoxin Cl6.7 of Californiconus californicus (California cone).